The primary structure comprises 336 residues: DNA-directed RNA polymerase subunit alpha (336 aa).

Residues Met1–Asp232 are alpha N-terminal domain (alpha-NTD). Residues Phe248 to Tyr336 form an alpha C-terminal domain (alpha-CTD) region.

Belongs to the RNA polymerase alpha chain family. In terms of assembly, homodimer. The RNAP catalytic core consists of 2 alpha, 1 beta, 1 beta' and 1 omega subunit. When a sigma factor is associated with the core the holoenzyme is formed, which can initiate transcription.

The enzyme catalyses RNA(n) + a ribonucleoside 5'-triphosphate = RNA(n+1) + diphosphate. In terms of biological role, DNA-dependent RNA polymerase catalyzes the transcription of DNA into RNA using the four ribonucleoside triphosphates as substrates. This Rhizobium radiobacter (Agrobacterium tumefaciens) protein is DNA-directed RNA polymerase subunit alpha.